The primary structure comprises 420 residues: D-tagatose-1,6-bisphosphate aldolase subunit GatZ (420 aa).

It belongs to the GatZ/KbaZ family. GatZ subfamily. In terms of assembly, forms a complex with GatY.

It functions in the pathway carbohydrate metabolism; D-tagatose 6-phosphate degradation; D-glyceraldehyde 3-phosphate and glycerone phosphate from D-tagatose 6-phosphate: step 2/2. Component of the tagatose-1,6-bisphosphate aldolase GatYZ that is required for full activity and stability of the Y subunit. Could have a chaperone-like function for the proper and stable folding of GatY. When expressed alone, GatZ does not show any aldolase activity. Is involved in the catabolism of galactitol. The polypeptide is D-tagatose-1,6-bisphosphate aldolase subunit GatZ (Escherichia coli O7:K1 (strain IAI39 / ExPEC)).